Reading from the N-terminus, the 117-residue chain is Pancreatic progenitor cell differentiation and proliferation factor A (117 aa).

The disordered stretch occupies residues 22-46 (GSTSSNSSCSSSEYTGEVIPHPPGL). Residues 23–33 (STSSNSSCSSS) are compositionally biased toward low complexity.

The protein belongs to the PPDPF family. Expressed exclusively in the exocrine cells during pancreas development.

In terms of biological role, probable regulator of exocrine pancreas development. This chain is Pancreatic progenitor cell differentiation and proliferation factor A (ppdpfa), found in Danio rerio (Zebrafish).